The primary structure comprises 349 residues: Bifunctional nitrilase/nitrile hydratase NIT4A (349 aa).

The 273-residue stretch at 29-301 (VRATVVQAST…EALISADLDL (273 aa)) folds into the CN hydrolase domain. Glu-69 (proton acceptor) is an active-site residue. Lys-156 is a catalytic residue. Cys-190 (nucleophile) is an active-site residue.

The protein belongs to the carbon-nitrogen hydrolase superfamily. Nitrilase family. Ubiquitous.

It catalyses the reaction L-asparagine = 3-cyano-L-alanine + H2O. It carries out the reaction 3-cyano-L-alanine + 2 H2O = L-aspartate + NH4(+). Its function is as follows. Involved in the cyanide detoxification pathway. Has nitrilase and nitrile-hydratase activity in the ratio 4.0:1, producing both asparagine and aspartic acid from beta-cyano-L-alanine (Ala(CN)). Can also use 3-phenylpropionitrile as substrate, but not indole-3-acetonitrile. This chain is Bifunctional nitrilase/nitrile hydratase NIT4A (NIT4A), found in Lupinus angustifolius (Narrow-leaved blue lupine).